Consider the following 42-residue polypeptide: Photosystem I reaction center subunit IX (42 aa).

Residues 7 to 27 (YLSAAPVLSTLWLGALAALLI) form a helical membrane-spanning segment.

This sequence belongs to the PsaJ family.

The protein localises to the plastid membrane. May help in the organization of the PsaE and PsaF subunits. The polypeptide is Photosystem I reaction center subunit IX (Cuscuta reflexa (Southern Asian dodder)).